Consider the following 144-residue polypeptide: Flagellar assembly factor FliW (144 aa).

This sequence belongs to the FliW family. Monomer. One copy interacts with the each alpha-helical wing of the CsrA homodimer, yielding a FliW-CsrA(2)-FliW complex. Comparison with a CsrA-mRNA structure (2JPP) suggests CsrA cannot bind both mRNA and FliW at the same time. Interacts with flagellin.

It localises to the cytoplasm. Acts as an anti-CsrA protein, binds CsrA and prevents it from repressing translation of its target genes, one of which is flagellin. Binds to flagellin and participates in the assembly of the flagellum. Functionally, allosterically inhibits CsrA binding to mRNA in a non-competitive fashion by preventing CsrA binding to the 5'-UTR. This Geobacillus thermodenitrificans (strain NG80-2) protein is Flagellar assembly factor FliW.